The sequence spans 111 residues: Nucleoid-associated protein TTE0040 (111 aa).

Belongs to the YbaB/EbfC family. Homodimer.

The protein localises to the cytoplasm. It is found in the nucleoid. In terms of biological role, binds to DNA and alters its conformation. May be involved in regulation of gene expression, nucleoid organization and DNA protection. The polypeptide is Nucleoid-associated protein TTE0040 (Caldanaerobacter subterraneus subsp. tengcongensis (strain DSM 15242 / JCM 11007 / NBRC 100824 / MB4) (Thermoanaerobacter tengcongensis)).